Reading from the N-terminus, the 112-residue chain is Pediocin PA-1 immunity protein (112 aa).

Imparts immunity to pediocin PA-1/ACH to naturally sensitive host strains. This is Pediocin PA-1 immunity protein (pedB) from Pediococcus acidilactici.